The sequence spans 977 residues: Short transient receptor potential channel 4 (977 aa).

Over 1–324 the chain is Cytoplasmic; that stretch reads MAQFYYKRNV…YDEFPGWRRR (324 aa). 4 ANK repeats span residues 29-60, 71-93, 96-118, and 141-165; these read LSPS…IYFK, RTAL…LSFN, VGDA…LLNH, and PDIT…VQKG. Zn(2+) contacts are provided by His-172, Cys-176, Cys-178, and Cys-181. A coiled-coil region spans residues 223–260; the sequence is LSWELQELSKVENEFKSEYEELSRQCKQFAKDLLDQTR. The discontinuously helical intramembrane region spans 325–359; sequence HWAVKMVTCFIIGLLFPVFSVCYLIAPKSPLGLFI. Residues 360–362 are Cytoplasmic-facing; sequence RKP. A helical transmembrane segment spans residues 363 to 383; it reads FIKFICHTASYLTFLFLLLLA. Residues 384–403 lie on the Extracellular side of the membrane; that stretch reads SQHIDRSDLNRQGPPPTIVE. A helical transmembrane segment spans residues 404-418; it reads WMILPWVLGFIWGEI. 4 residues coordinate Ca(2+): Glu-417, Gln-420, Asn-435, and Asp-438. Residues 419–432 lie on the Cytoplasmic side of the membrane; sequence KQMWDGGLQDYIHD. Residues 433-453 form a helical membrane-spanning segment; the sequence is WWNLMDFVMNSLYLATISLKI. The Extracellular portion of the chain corresponds to 454-475; sequence VAFVKYSALNPRESWDMWHPTL. A helical transmembrane segment spans residues 476–498; that stretch reads VAEALFAIANIFSSLRLISLFTA. At 499 to 511 the chain is on the cytoplasmic side; that stretch reads NSHLGPLQISLGR. The helical transmembrane segment at 512–534 threads the bilayer; it reads MLLDILKFLFIYCLVLLAFANGL. The Extracellular portion of the chain corresponds to 535–599; that stretch reads NQLYFYYEET…HEFTDFVGAT (65 aa). Cys-549 and Cys-554 are oxidised to a cystine. Residues 600-620 form a helical membrane-spanning segment; that stretch reads MFGTYNVISLVVLLNMLIAMM. Residues 615-977 form an interaction with ITPR1, ITPR2 and ITPR3 region; that stretch reads MLIAMMNNSY…AHEDYVTTRL (363 aa). Topologically, residues 621 to 977 are cytoplasmic; that stretch reads NNSYQLIADH…AHEDYVTTRL (357 aa). The disordered stretch occupies residues 767 to 790; it reads AASSASSADSDEKSHSEGNGKDKR. Residues 776 to 787 show a composition bias toward basic and acidic residues; sequence SDEKSHSEGNGK. 2 positions are modified to phosphotyrosine; by FYN: Tyr-959 and Tyr-972. The PDZ-binding domain stretch occupies residues 975–977; the sequence is TRL.

The protein belongs to the transient receptor (TC 1.A.4) family. STrpC subfamily. TRPC4 sub-subfamily. As to quaternary structure, homotetramer. Heterotetramer with TRPC1 and/or TRPC5. Forms a heteromeric ion channel with TRPC1, with a 1:3 TRPC1:TRPC4 stoichiometry. Interacts with TRPC4AP. Isoform alpha but not isoform beta interacts with ITPR1, ITPR2 and ITPR3. Interacts with NHERF1. Interacts with MX1 and RNF24. Interacts (via CIRB domain) with SESTD1 (via the spectrin 1 repeat) and SPTBN5 (via C-terminus). Interacts with CDH5 and CTNNB1. Interacts (via protein 4.1-binding domain) with EPB41L2. Interacts with PLSCR1.

Its subcellular location is the cell membrane. It catalyses the reaction Ca(2+)(in) = Ca(2+)(out). It carries out the reaction Na(+)(in) = Na(+)(out). The enzyme catalyses Li(+)(in) = Li(+)(out). The catalysed reaction is Cs(+)(in) = Cs(+)(out). With respect to regulation, may be operated by a phosphatidylinositol second messenger system activated by receptor tyrosine kinases or G-protein coupled receptors. May be activated by intracellular calcium store depletion. Forms a receptor-activated non-selective calcium permeant cation channel. Acts as a cell-cell contact-dependent endothelial calcium entry channel. Forms a homomeric ion channel or a heteromeric ion channel with TRPC1; the heteromeric ion channel has reduced calcium permeability compared to the homomeric channel. Also permeable to monovalent ions including sodium, lithium and cesium ions. Its function is as follows. Forms a non-selective a receptor-activated calcium permeant cation channel. Probably is operated by a phosphatidylinositol second messenger system activated by receptor tyrosine kinases or G-protein coupled receptors. This chain is Short transient receptor potential channel 4 (Trpc4), found in Rattus norvegicus (Rat).